A 109-amino-acid polypeptide reads, in one-letter code: Iron-sulfur cluster assembly protein CyaY (109 aa).

The protein belongs to the frataxin family.

Involved in iron-sulfur (Fe-S) cluster assembly. May act as a regulator of Fe-S biogenesis. The chain is Iron-sulfur cluster assembly protein CyaY from Shewanella sp. (strain ANA-3).